The sequence spans 229 residues: Potassium/proton antiporter CemA (229 aa).

3 helical membrane-spanning segments follow: residues Phe7–Phe27, Ile107–Gly127, and Ile189–Ile209.

It belongs to the CemA family.

It is found in the plastid. The protein resides in the chloroplast inner membrane. It catalyses the reaction K(+)(in) + H(+)(out) = K(+)(out) + H(+)(in). Its function is as follows. Contributes to K(+)/H(+) antiport activity by supporting proton efflux to control proton extrusion and homeostasis in chloroplasts in a light-dependent manner to modulate photosynthesis. Prevents excessive induction of non-photochemical quenching (NPQ) under continuous-light conditions. Indirectly promotes efficient inorganic carbon uptake into chloroplasts. This Guizotia abyssinica (Niger) protein is Potassium/proton antiporter CemA.